The sequence spans 299 residues: HTH-type transcriptional regulator ArgP (299 aa).

An HTH lysR-type domain is found at 4 to 60 (PDYRALQALDAVIRERGFERAAQKLCITQSAVSQRIKQLENLFGQPLLVRTVPPQPT). The segment at residues 21–40 (FERAAQKLCITQSAVSQRIK) is a DNA-binding region (H-T-H motif).

The protein belongs to the LysR transcriptional regulatory family. As to quaternary structure, homodimer.

In terms of biological role, controls the transcription of genes involved in arginine and lysine metabolism. The polypeptide is HTH-type transcriptional regulator ArgP (Proteus mirabilis (strain HI4320)).